The chain runs to 353 residues: Ferredoxin--NADP reductase 1 (353 aa).

FAD is bound by residues aspartate 43, glutamine 51, tyrosine 56, alanine 96, phenylalanine 135, aspartate 300, and serine 341.

This sequence belongs to the ferredoxin--NADP reductase type 2 family. As to quaternary structure, homodimer. FAD serves as cofactor.

The catalysed reaction is 2 reduced [2Fe-2S]-[ferredoxin] + NADP(+) + H(+) = 2 oxidized [2Fe-2S]-[ferredoxin] + NADPH. The sequence is that of Ferredoxin--NADP reductase 1 from Cupriavidus metallidurans (strain ATCC 43123 / DSM 2839 / NBRC 102507 / CH34) (Ralstonia metallidurans).